A 493-amino-acid polypeptide reads, in one-letter code: MKYSDLRDFISQLEKIGQLKRITQPISTHLTMTEISDRTLRAKGPALLFENAVSESGEPYNMPVLTNLFGTPDRVALAMGQKDVGALRDVGKLLAMLKEPEPPKGFRDALGKIPVYKQVLNMPVKVIKKPLCQQIVLSGDDVDLTKMPIQSCWPGDVAPLITWGLTVTRGPHKERQNLGIYRQQVLSKNKVIMRWLSHRGGALDFQEFKKENPGEKYPVSVALGADPATILGAVTPVPDTLSEYAFAGLLRGAKTEVAKSISNDLEVPATAEIILEGYLDPEEMAPEGPYGDHTGYYNEVDNFPVMTVTHITMRKDAIYHSTYTGRPPDEPAILGVALNEVFVPILQKQFPEIQDFYLPPEGCSYRLAVVTIKKQYAGHAKRVMMGVWSFLRQFMYTKFVIVCDDDINARDWEDVIWAMTTRMDPSRDTVLIENTPIDYLDFASPVSGLGSKMGMDATNKWPGETNREWGEPIEMTQEIKNQVDELWDELDIL.

Residue N177 participates in Mn(2+) binding. Prenylated FMN is bound by residues 180-182 (IYR), 194-196 (RWL), and 199-200 (RG). Position 243 (E243) interacts with Mn(2+). Catalysis depends on D292, which acts as the Proton donor.

This sequence belongs to the UbiD family. In terms of assembly, homohexamer. Prenylated FMN is required as a cofactor. Requires Mn(2+) as cofactor.

It localises to the cell membrane. The catalysed reaction is a 4-hydroxy-3-(all-trans-polyprenyl)benzoate + H(+) = a 2-(all-trans-polyprenyl)phenol + CO2. It functions in the pathway cofactor biosynthesis; ubiquinone biosynthesis. Its function is as follows. Catalyzes the decarboxylation of 3-octaprenyl-4-hydroxy benzoate to 2-octaprenylphenol, an intermediate step in ubiquinone biosynthesis. In Colwellia psychrerythraea (strain 34H / ATCC BAA-681) (Vibrio psychroerythus), this protein is 3-octaprenyl-4-hydroxybenzoate carboxy-lyase.